The following is a 106-amino-acid chain: ATP-dependent Clp protease adapter protein ClpS (106 aa).

Belongs to the ClpS family. As to quaternary structure, binds to the N-terminal domain of the chaperone ClpA.

Involved in the modulation of the specificity of the ClpAP-mediated ATP-dependent protein degradation. The protein is ATP-dependent Clp protease adapter protein ClpS of Nocardia farcinica (strain IFM 10152).